The primary structure comprises 428 residues: GTPase Obg (428 aa).

Residues 1–158 enclose the Obg domain; it reads MFVDQVKIYV…RDVILELKVL (158 aa). In terms of domain architecture, OBG-type G spans 159–329; that stretch reads ADVGLVGFPS…LLFEVANLIE (171 aa). GTP contacts are provided by residues 165-172, 190-194, 212-215, 282-285, and 310-312; these read GFPSVGKS, FTTIV, DLPG, NKMD, and SAV. Positions 172 and 192 each coordinate Mg(2+). The region spanning 350-428 is the OCT domain; that stretch reads KFDTEGVKFE…ILEYEFEFID (79 aa).

This sequence belongs to the TRAFAC class OBG-HflX-like GTPase superfamily. OBG GTPase family. In terms of assembly, monomer. It depends on Mg(2+) as a cofactor.

It localises to the cytoplasm. Its function is as follows. An essential GTPase which binds GTP, GDP and possibly (p)ppGpp with moderate affinity, with high nucleotide exchange rates and a fairly low GTP hydrolysis rate. Plays a role in control of the cell cycle, stress response, ribosome biogenesis and in those bacteria that undergo differentiation, in morphogenesis control. The protein is GTPase Obg of Bacillus cereus (strain B4264).